A 359-amino-acid polypeptide reads, in one-letter code: NF-kappa-B inhibitor beta (359 aa).

Phosphoserine; by RPS6KA1 occurs at positions 19 and 23. ANK repeat units lie at residues 57-86, 93-122, and 126-155; these read DGDTALHLAVIHQHEPFLDFLLGFSAGTEY, LGQTALHLAAILGEASTVEKLYAAGAGVLV, and GGHTALHLACRVRAHTCACVLLQPRPSHPR. A disordered region spans residues 153–194; the sequence is HPRDASDTYLTQSQDCTPDTSHAPAAVDSQPNPENEEEPRDE. A compositionally biased stretch (polar residues) spans 160-172; sequence TYLTQSQDCTPDT. ANK repeat units follow at residues 206-235, 240-269, and 273-302; these read DGHTPLHVAVIHKDAEMVRLLRDAGADLNK, CGRTPLHLAVEAQAASVLELLLKAGADPTA, and GGRTPLGSALLRPNPILARLLRAHGAPEPE. The segment at 298–359 is disordered; that stretch reads APEPEDEDDK…KPLPDDPNPA (62 aa). Phosphoserine occurs at positions 313 and 318. The span at 318-331 shows a compositional bias: acidic residues; the sequence is SDSDNRDEGDEYDD. The segment covering 344–359 has biased composition (pro residues); the sequence is PPSPASKPLPDDPNPA.

Belongs to the NF-kappa-B inhibitor family. As to quaternary structure, interacts with THRB (via ligand-binding domain). Interacts with RELA and REL. Interacts with COMMD1. Interacts with inhibitor kappa B-interacting Ras-like NKIRAS1 and NKIRAS2. Phosphorylated by RPS6KA1; followed by degradation. Interaction with NKIRAS1 and NKIRAS2 probably prevents phosphorylation. As to expression, highly expressed in testis followed by spleen.

Its subcellular location is the cytoplasm. It localises to the nucleus. Inhibits NF-kappa-B by complexing with and trapping it in the cytoplasm. However, the unphosphorylated form resynthesized after cell stimulation is able to bind NF-kappa-B allowing its transport to the nucleus and protecting it to further NFKBIA-dependent inactivation. Association with inhibitor kappa B-interacting NKIRAS1 and NKIRAS2 prevent its phosphorylation rendering it more resistant to degradation, explaining its slower degradation. The protein is NF-kappa-B inhibitor beta (Nfkbib) of Mus musculus (Mouse).